The sequence spans 70 residues: Brevinin-1CG3 (70 aa).

The first 22 residues, 1–22, serve as a signal peptide directing secretion; that stretch reads MFTLKKSLLLLFFLGTINLSLC. Residues 23-44 constitute a propeptide, removed in mature form; sequence EQERNAEEERRDDSDKRDVEVE. Cys64 and Cys70 are disulfide-bonded.

It belongs to the frog skin active peptide (FSAP) family. Brevinin subfamily. Expressed by the skin glands.

Its subcellular location is the secreted. In terms of biological role, antimicrobial peptide active against a variety of Gram-positive and some Gram-negative bacterial strains. Has antifungal activity against a slime mold isolate. Has hemolytic activity against human erythrocytes. The polypeptide is Brevinin-1CG3 (Amolops chunganensis (Chungan torrent frog)).